The following is a 108-amino-acid chain: Urease subunit beta (108 aa).

The protein belongs to the urease beta subunit family. As to quaternary structure, heterotrimer of UreA (gamma), UreB (beta) and UreC (alpha) subunits. Three heterotrimers associate to form the active enzyme.

It is found in the cytoplasm. It catalyses the reaction urea + 2 H2O + H(+) = hydrogencarbonate + 2 NH4(+). It functions in the pathway nitrogen metabolism; urea degradation; CO(2) and NH(3) from urea (urease route): step 1/1. The protein is Urease subunit beta of Trichormus variabilis (strain ATCC 29413 / PCC 7937) (Anabaena variabilis).